The chain runs to 325 residues: MAAMTKALPRRLVGLASLRAVSTSSMDTLPKQVKIVEVGPRDGLQNEKNIVSTPVKIKLIDMLSEAGLSVIEATSFVSPKWVPQMADHAEVLKGIQKFPGITYPVLIPNLKGFEAAVAAGAKEVSIFGAASELFTKKNVNCSIEESFQRFDAILKAAQSANISVRGYVSCVLGCPYEGKISPAKVAEVTKKFYSMGCYEISLGDTIGVGTPGIMKDMLSAVMQEVPPAALAVHCHDTYGQALANTLMALQMGVSVVDSSVAGLGGCPYAQGASGNLATEDLVYMLEGLGIHTGVNLQKLLEAGNFICQALNRKTSSKVAQATCKL.

Residues 1 to 27 constitute a mitochondrion transit peptide; the sequence is MAAMTKALPRRLVGLASLRAVSTSSMD. Residues 33–300 form the Pyruvate carboxyltransferase domain; it reads VKIVEVGPRD…HTGVNLQKLL (268 aa). Residue R41 coordinates substrate. D42 contributes to the a divalent metal cation binding site. K48 is modified (N6-acetyllysine; alternate). Residue K48 is modified to N6-succinyllysine; alternate. K111 is modified (N6-acetyllysine). An N6-acetyllysine; alternate mark is found at K137 and K179. N6-succinyllysine; alternate occurs at positions 137 and 179. A divalent metal cation contacts are provided by H233 and H235. C266 is a catalytic residue. Residue N275 coordinates a divalent metal cation. The short motif at 323-325 is the Microbody targeting signal element; it reads CKL. At K324 the chain carries N6-acetyllysine.

This sequence belongs to the HMG-CoA lyase family. In terms of assembly, homodimer; disulfide-linked. Can also form homotetramers.

The protein localises to the mitochondrion matrix. The protein resides in the peroxisome. It carries out the reaction (3S)-3-hydroxy-3-methylglutaryl-CoA = acetoacetate + acetyl-CoA. It participates in metabolic intermediate metabolism; (S)-3-hydroxy-3-methylglutaryl-CoA degradation; acetoacetate from (S)-3-hydroxy-3-methylglutaryl-CoA: step 1/1. Mitochondrial 3-hydroxy-3-methylglutaryl-CoA lyase that catalyzes a cation-dependent cleavage of (S)-3-hydroxy-3-methylglutaryl-CoA into acetyl-CoA and acetoacetate, a key step in ketogenesis. Terminal step in leucine catabolism. Ketone bodies (beta-hydroxybutyrate, acetoacetate and acetone) are essential as an alternative source of energy to glucose, as lipid precursors and as regulators of metabolism. This chain is Hydroxymethylglutaryl-CoA lyase, mitochondrial (HMGCL), found in Macaca fascicularis (Crab-eating macaque).